A 306-amino-acid polypeptide reads, in one-letter code: Small ribosomal subunit protein uS2 (306 aa).

Basic and acidic residues predominate over residues 229–238 (GEESAAEERP). Residues 229 to 306 (GEESAAEERP…VGEGDESEER (78 aa)) form a disordered region. Residues 261 to 287 (QPGEPEAEAFEEAAGEPEDSTEEEAAE) are compositionally biased toward acidic residues.

This sequence belongs to the universal ribosomal protein uS2 family.

The sequence is that of Small ribosomal subunit protein uS2 from Rubrobacter xylanophilus (strain DSM 9941 / JCM 11954 / NBRC 16129 / PRD-1).